We begin with the raw amino-acid sequence, 179 residues long: Large ribosomal subunit protein uL6 (179 aa).

The protein belongs to the universal ribosomal protein uL6 family. Part of the 50S ribosomal subunit.

In terms of biological role, this protein binds to the 23S rRNA, and is important in its secondary structure. It is located near the subunit interface in the base of the L7/L12 stalk, and near the tRNA binding site of the peptidyltransferase center. This is Large ribosomal subunit protein uL6 from Mycobacteroides abscessus (strain ATCC 19977 / DSM 44196 / CCUG 20993 / CIP 104536 / JCM 13569 / NCTC 13031 / TMC 1543 / L948) (Mycobacterium abscessus).